The sequence spans 1207 residues: DNA-directed RNA polymerase subunit beta' (1207 aa).

Zn(2+) is bound by residues cysteine 60, cysteine 62, cysteine 75, and cysteine 78. Mg(2+) contacts are provided by aspartate 450, aspartate 452, and aspartate 454. Zn(2+) contacts are provided by cysteine 819, cysteine 893, cysteine 900, and cysteine 903.

This sequence belongs to the RNA polymerase beta' chain family. The RNAP catalytic core consists of 2 alpha, 1 beta, 1 beta' and 1 omega subunit. When a sigma factor is associated with the core the holoenzyme is formed, which can initiate transcription. The cofactor is Mg(2+). It depends on Zn(2+) as a cofactor.

The catalysed reaction is RNA(n) + a ribonucleoside 5'-triphosphate = RNA(n+1) + diphosphate. Functionally, DNA-dependent RNA polymerase catalyzes the transcription of DNA into RNA using the four ribonucleoside triphosphates as substrates. The chain is DNA-directed RNA polymerase subunit beta' from Streptococcus pyogenes serotype M3 (strain ATCC BAA-595 / MGAS315).